Reading from the N-terminus, the 675-residue chain is MANLPIQHASLSWNAQGTPVSQQFDDVYFSNQDGLAETRYVFLQGNQFPERFGTHPRTACVIAETGFGTGLNFLTLWQAFAHFRQQQPQATLRHLHFISFEKFPLRQHDLAAAHAQWPELAEFADELRQQWPLALPGCHRLILAQGSITLDLWFGDVNVILPELDDTQNHQVDAWFLDGFAPSKNPDMWTDNLFQAMARLCRKEGTFATFTAAGFVRRGLQQAGFHVSKVKGFGQKREMLSGLLPDTLPITSPTPWYSRPAASTTDDIAIIGGGIASVLTALALQRRGANVTLYCAESQPATGASGNRQGALYPLLNNRHDAVSRFFSLAFDFAHRSYSALAQQGLEFEHQWCGVSQLAWDEKSARKIEQILQGEWPEELVVSVDAQQLEKQSGLNPGVNGITYPDGGWLCPAELTAAALKLAQQNGLSVQMSTAVSALEKTDSGWALTLSAGQQVNHAVVVLANGHHITDWPQTRHLPGYAVRGQVSHIPTNPVLGQLKHVLCYDGYLTPVSPQHQTHCIGASYLRGQAHGDYREEEQQENRQRLLNCLPNADWAKTVDISDAQARQGVRCALRDHLPLIGAVPNYEQTLKEYENRLHPQHRADTVSSAPYWQDLFIIGALGSRGLCSAPLAAEILASQMYAEPLPLDRDTLAALNPNRFWIRKLLKGKPVTHD.

Residues 1-245 are tRNA (mnm(5)s(2)U34)-methyltransferase; that stretch reads MANLPIQHAS…KREMLSGLLP (245 aa). The segment at 271–675 is FAD-dependent cmnm(5)s(2)U34 oxidoreductase; that stretch reads IGGGIASVLT…LLKGKPVTHD (405 aa).

The protein in the N-terminal section; belongs to the methyltransferase superfamily. tRNA (mnm(5)s(2)U34)-methyltransferase family. This sequence in the C-terminal section; belongs to the DAO family. Requires FAD as cofactor.

The protein localises to the cytoplasm. The catalysed reaction is 5-aminomethyl-2-thiouridine(34) in tRNA + S-adenosyl-L-methionine = 5-methylaminomethyl-2-thiouridine(34) in tRNA + S-adenosyl-L-homocysteine + H(+). Catalyzes the last two steps in the biosynthesis of 5-methylaminomethyl-2-thiouridine (mnm(5)s(2)U) at the wobble position (U34) in tRNA. Catalyzes the FAD-dependent demodification of cmnm(5)s(2)U34 to nm(5)s(2)U34, followed by the transfer of a methyl group from S-adenosyl-L-methionine to nm(5)s(2)U34, to form mnm(5)s(2)U34. The protein is tRNA 5-methylaminomethyl-2-thiouridine biosynthesis bifunctional protein MnmC of Pectobacterium atrosepticum (strain SCRI 1043 / ATCC BAA-672) (Erwinia carotovora subsp. atroseptica).